Here is a 261-residue protein sequence, read N- to C-terminus: RNA polymerase sigma factor SigF (261 aa).

The tract at residues 43–112 (IVQRCLPLAD…VRRHFRDNSW (70 aa)) is sigma-70 factor domain-2. The Interaction with polymerase core subunit RpoC motif lies at 67-70 (DLIQ). The sigma-70 factor domain-3 stretch occupies residues 123 to 189 (LHLRLGTATA…DDDARAITDT (67 aa)). The tract at residues 209–258 (LLEALPERERTVLVLRFFDSMTQTQIAERVGISQMHVSRLLAKSLARLRD) is sigma-70 factor domain-4. Positions 231–250 (QTQIAERVGISQMHVSRLLA) form a DNA-binding region, H-T-H motif.

It belongs to the sigma-70 factor family. Monomer. Interacts transiently with the RNA polymerase catalytic core formed by RpoA, RpoB, RpoC and RpoZ (2 alpha, 1 beta, 1 beta' and 1 omega subunit) to form the RNA polymerase holoenzyme that can initiate transcription. Interacts (via sigma-70 factor domain 4) with anti-sigma-F factor RsbW (UsfX).

Sigma factors are initiation factors that promote the attachment of RNA polymerase to specific initiation sites and are then released. Held in an inactive form by a cognate anti-sigma factor RsbW (UsfX) until released. Its regulon, determined following disruption, consists of 38 genes decreased in exponential phase, 187 genes decreased in early S-phase, and 277 genes decreased in late S-phase. The protein is RNA polymerase sigma factor SigF (sigF) of Mycobacterium tuberculosis (strain CDC 1551 / Oshkosh).